Here is a 316-residue protein sequence, read N- to C-terminus: MQITRPHNFETFIGQKNLISTLKAMIESSKKQNKVLNHILFYGMPGMGKTSLAGIIANETKNKIHFIQGSNLEKKSDLINILSVINENDIVFIDEIHSINKNIIEFLYSAMEDFVFDLIIGTESNAKALRMKIKPFTLIGATTKINEMAQPFKDRFGYIARFVSYNAEDMKQIIRNSIKLLNINLGEEHFDFVASYSRNTPRIVNHLLERINDFAIVKNAGIIDKKIIKKTFKSLDLYEYGLTKDHVEYLQLLRDGFDSKPVSLDTLSGVLIHPKEVLVNEIEPILLYLKLITKTSKGRMISSKGITYLLKEKLIW.

Residues 1 to 165 are large ATPase domain (RuvB-L); it reads MQITRPHNFE…FGYIARFVSY (165 aa). Residues Arg5, Gly46, Lys49, Thr50, Ser51, 112–114, Arg155, Tyr165, and Arg202 contribute to the ATP site; that span reads EDF. Residue Thr50 coordinates Mg(2+). The interval 166-236 is small ATPAse domain (RuvB-S); the sequence is NAEDMKQIIR…IIKKTFKSLD (71 aa). The head domain (RuvB-H) stretch occupies residues 239-316; it reads EYGLTKDHVE…TYLLKEKLIW (78 aa). Positions 294 and 299 each coordinate DNA.

The protein belongs to the RuvB family. In terms of assembly, homohexamer. Forms an RuvA(8)-RuvB(12)-Holliday junction (HJ) complex. HJ DNA is sandwiched between 2 RuvA tetramers; dsDNA enters through RuvA and exits via RuvB. An RuvB hexamer assembles on each DNA strand where it exits the tetramer. Each RuvB hexamer is contacted by two RuvA subunits (via domain III) on 2 adjacent RuvB subunits; this complex drives branch migration. In the full resolvosome a probable DNA-RuvA(4)-RuvB(12)-RuvC(2) complex forms which resolves the HJ.

Its subcellular location is the cytoplasm. It carries out the reaction ATP + H2O = ADP + phosphate + H(+). Functionally, the RuvA-RuvB-RuvC complex processes Holliday junction (HJ) DNA during genetic recombination and DNA repair, while the RuvA-RuvB complex plays an important role in the rescue of blocked DNA replication forks via replication fork reversal (RFR). RuvA specifically binds to HJ cruciform DNA, conferring on it an open structure. The RuvB hexamer acts as an ATP-dependent pump, pulling dsDNA into and through the RuvAB complex. RuvB forms 2 homohexamers on either side of HJ DNA bound by 1 or 2 RuvA tetramers; 4 subunits per hexamer contact DNA at a time. Coordinated motions by a converter formed by DNA-disengaged RuvB subunits stimulates ATP hydrolysis and nucleotide exchange. Immobilization of the converter enables RuvB to convert the ATP-contained energy into a lever motion, pulling 2 nucleotides of DNA out of the RuvA tetramer per ATP hydrolyzed, thus driving DNA branch migration. The RuvB motors rotate together with the DNA substrate, which together with the progressing nucleotide cycle form the mechanistic basis for DNA recombination by continuous HJ branch migration. Branch migration allows RuvC to scan DNA until it finds its consensus sequence, where it cleaves and resolves cruciform DNA. This is Holliday junction branch migration complex subunit RuvB from Mycoplasmopsis synoviae (strain 53) (Mycoplasma synoviae).